The following is a 111-amino-acid chain: Beta-2-microglobulin (111 aa).

An N-terminal signal peptide occupies residues 1 to 17; sequence MRALILLSLGLLRVAVP. The Ig-like C1-type domain maps to 20-111; sequence PQVVVYTYKP…KTSIYKLESF (92 aa).

It belongs to the beta-2-microglobulin family. As to quaternary structure, heterodimer of an alpha chain and a beta chain. Beta-2-microglobulin is the beta-chain of major histocompatibility complex class I molecules.

It is found in the secreted. Its function is as follows. Component of the class I major histocompatibility complex (MHC). Involved in the presentation of peptide antigens to the immune system. The sequence is that of Beta-2-microglobulin (b2m) from Rostroraja eglanteria (Clearnose skate).